Consider the following 219-residue polypeptide: MNLSCSLVLLGGGKGERFNSLQPKQYTHLCGEPLILHALHAYQRLPFVQEVVVVCEEQYRELFLPYSVKFASPGTLRQDSVFSGLQQVFTPWVCIHDGVRPFVYADEVIEVCSAARKTGAAALASPATYTIKSCAPVRTLDRDALAVIHTPQCLDTEVLREGLLLARAMDFSLSDDTEAAELLGIEPTLVFSNRVQIKVTYPEDLLFAETLLSKSSTYK.

The protein belongs to the IspD/TarI cytidylyltransferase family. IspD subfamily.

It carries out the reaction 2-C-methyl-D-erythritol 4-phosphate + CTP + H(+) = 4-CDP-2-C-methyl-D-erythritol + diphosphate. It participates in isoprenoid biosynthesis; isopentenyl diphosphate biosynthesis via DXP pathway; isopentenyl diphosphate from 1-deoxy-D-xylulose 5-phosphate: step 2/6. Its function is as follows. Catalyzes the formation of 4-diphosphocytidyl-2-C-methyl-D-erythritol from CTP and 2-C-methyl-D-erythritol 4-phosphate (MEP). The chain is 2-C-methyl-D-erythritol 4-phosphate cytidylyltransferase from Chlamydia trachomatis serovar L2 (strain ATCC VR-902B / DSM 19102 / 434/Bu).